The sequence spans 88 residues: UPF0297 protein LACR_0137 (88 aa).

Belongs to the UPF0297 family.

The protein is UPF0297 protein LACR_0137 of Lactococcus lactis subsp. cremoris (strain SK11).